The chain runs to 374 residues: RNA polymerase sigma factor SigA (374 aa).

Residues L141–T211 are sigma-70 factor domain-2. The Interaction with polymerase core subunit RpoC motif lies at D165–Q168. Residues E220 to H296 are sigma-70 factor domain-3. The tract at residues V309–H362 is sigma-70 factor domain-4. The H-T-H motif DNA-binding region spans L335–A354.

Belongs to the sigma-70 factor family. RpoD/SigA subfamily. Interacts transiently with the RNA polymerase catalytic core.

The protein localises to the cytoplasm. In terms of biological role, sigma factors are initiation factors that promote the attachment of RNA polymerase to specific initiation sites and are then released. This sigma factor is the primary sigma factor during exponential growth. The polypeptide is RNA polymerase sigma factor SigA (Listeria innocua serovar 6a (strain ATCC BAA-680 / CLIP 11262)).